A 432-amino-acid chain; its full sequence is Adenylosuccinate synthetase (432 aa).

GTP contacts are provided by residues 13 to 19 (GDEGKGK) and 41 to 43 (GHT). The Proton acceptor role is filled by aspartate 14. Mg(2+) is bound by residues aspartate 14 and glycine 41. IMP-binding positions include 14–17 (DEGK), 39–42 (NAGH), threonine 130, arginine 144, glutamine 225, threonine 240, and arginine 304. The Proton donor role is filled by histidine 42. Position 300–306 (300–306 (AVTGRPR)) interacts with substrate. GTP-binding positions include arginine 306, 332–334 (KLD), and 415–417 (STG).

It belongs to the adenylosuccinate synthetase family. In terms of assembly, homodimer. It depends on Mg(2+) as a cofactor.

It is found in the cytoplasm. It carries out the reaction IMP + L-aspartate + GTP = N(6)-(1,2-dicarboxyethyl)-AMP + GDP + phosphate + 2 H(+). The protein operates within purine metabolism; AMP biosynthesis via de novo pathway; AMP from IMP: step 1/2. Functionally, plays an important role in the de novo pathway of purine nucleotide biosynthesis. Catalyzes the first committed step in the biosynthesis of AMP from IMP. The sequence is that of Adenylosuccinate synthetase from Histophilus somni (strain 2336) (Haemophilus somnus).